The following is a 193-amino-acid chain: Thymidine kinase (193 aa).

Residues 16 to 23 (GPMFSGKS) and 89 to 92 (DEIQ) contribute to the ATP site. Glu90 acts as the Proton acceptor in catalysis. Zn(2+) is bound by residues Cys146, Cys149, Cys184, and Cys187.

Belongs to the thymidine kinase family. Homotetramer.

It localises to the cytoplasm. It catalyses the reaction thymidine + ATP = dTMP + ADP + H(+). The polypeptide is Thymidine kinase (Thermoanaerobacter pseudethanolicus (strain ATCC 33223 / 39E) (Clostridium thermohydrosulfuricum)).